A 564-amino-acid polypeptide reads, in one-letter code: Hexose transporter HXT13 (564 aa).

Residues 1-52 (MSSAQSSIDSDGDVRDADIHVAPPVEKEWSDGFDDNEVINGDNVEPPKRGLI) lie on the Cytoplasmic side of the membrane. The chain crosses the membrane as a helical span at residues 53–73 (GYLVIYLLCYPISFGGFLPGW). Topologically, residues 74–109 (DSGITAGFINMDNFKMNFGSYKHSTGEYYLSNVRMG) are extracellular. A helical transmembrane segment spans residues 110–130 (LLVAMFSIGCAIGGLIFARLA). The Cytoplasmic portion of the chain corresponds to 131–136 (DTLGRR). Residues 137 to 157 (LAIVIVVLVYMVGAIIQISSN) form a helical membrane-spanning segment. Topologically, residues 158–167 (HKWYQYFVGK) are extracellular. Residues 168-188 (IIYGLGAGGCSVLCPMLLSEI) traverse the membrane as a helical segment. Residues 189–194 (APTDLR) lie on the Cytoplasmic side of the membrane. The helical transmembrane segment at 195-215 (GGLVSLYQLNMTFGIFLGYCS) threads the bilayer. Residues 216–229 (VYGTRKYDNTAQWR) are Extracellular-facing. Residues 230–250 (VPLGLCFLWALIIIIGMLLVP) form a helical membrane-spanning segment. Residues 251 to 333 (ESPRYLIECE…VQTFLQLTGE (83 aa)) are Cytoplasmic-facing. A helical transmembrane segment spans residues 334 to 350 (NYFFFYGTTIFKSVGLT). Over 351 to 356 (DGFETS) the chain is Extracellular. The chain crosses the membrane as a helical span at residues 357–374 (IVLGTVNFFSTIIAVMVV). Topologically, residues 375–381 (DKIGRRK) are cytoplasmic. Residues 382 to 402 (CLLFGAAGMMACMVIFASIGV) form a helical membrane-spanning segment. Over 403–424 (KCLYPHGQDGPSSKGAGNAMIV) the chain is Extracellular. Residues 425–445 (FTCFYIFCFATTWAPVAYIVV) form a helical membrane-spanning segment. The Cytoplasmic portion of the chain corresponds to 446–462 (AESFPSKVKSRAMSIST). Residues 463–483 (ACNWLWQFLIGFFTPFITGSI) form a helical membrane-spanning segment. A topological domain (extracellular) is located at residue His-484. The chain crosses the membrane as a helical span at residues 485-505 (FYYGYVFVGCLVAMFLYVFFF). Topologically, residues 506-564 (LPETIGLSLEEIQLLYEEGIKPWKSASWVPPSRRGISSEESKTEKKDWKKFLKFSKNSD) are cytoplasmic. Positions 530 to 551 (SASWVPPSRRGISSEESKTEKK) are disordered. Residues 541–551 (ISSEESKTEKK) show a composition bias toward basic and acidic residues.

Belongs to the major facilitator superfamily. Sugar transporter (TC 2.A.1.1) family.

Its subcellular location is the membrane. Probable glucose transporter. The chain is Hexose transporter HXT13 (HXT13) from Saccharomyces cerevisiae (strain ATCC 204508 / S288c) (Baker's yeast).